The following is a 63-amino-acid chain: Conotoxin LeDr243 (63 aa).

Residues 1–22 (MRCLPVFVILLLLIASTPSIDA) form the signal peptide. Positions 23-47 (RPKTKDDMPLASFNDNAKRILQILS) are excised as a propeptide. Position 60 is a cysteine amide (Cys-60). Positions 62–63 (LG) are excised as a propeptide.

It belongs to the conotoxin T superfamily. Contains 2 disulfide bonds that can be either 'C1-C3, C2-C4' or 'C1-C4, C2-C3', since these disulfide connectivities have been observed for conotoxins with cysteine framework V (for examples, see AC P0DQQ7 and AC P81755). In terms of tissue distribution, expressed by the venom duct.

Its subcellular location is the secreted. This is Conotoxin LeDr243 from Conus litteratus (Lettered cone).